The primary structure comprises 296 residues: Pre-mRNA-splicing factor CWC23 (296 aa).

A J domain is found at 14–86 (DLYKLLELNY…AKKAEYDQWV (73 aa)).

The protein belongs to the DnaJ family. In terms of assembly, associated with the spliceosome.

It is found in the cytoplasm. The protein localises to the nucleus. Involved in pre-mRNA splicing. May be involved in endoplasmic reticulum-associated protein degradation (ERAD) and required for growth at low and high temperatures. This chain is Pre-mRNA-splicing factor CWC23 (CWC23), found in Candida glabrata (strain ATCC 2001 / BCRC 20586 / JCM 3761 / NBRC 0622 / NRRL Y-65 / CBS 138) (Yeast).